We begin with the raw amino-acid sequence, 117 residues long: Transcription elongation factor A protein-like 8 (117 aa).

The segment at 1-81 (MQKSCDENEG…PEEVIRGVDE (81 aa)) is disordered. Basic and acidic residues predominate over residues 41-81 (NVREETDGSLRGEPAEPSPEPKEDTPARHLNPEEVIRGVDE). The stretch at 73–100 (EEVIRGVDELERLREEIRRVRNKFVLMH) forms a coiled coil.

The protein belongs to the TFS-II family. TFA subfamily. Highly expressed in kidney. Moderately expressed in heart and lung. Low expression in brain and liver. Expression is up-regulated in nephrectomized kidney.

It is found in the nucleus. In terms of biological role, may be involved in transcriptional regulation. This chain is Transcription elongation factor A protein-like 8 (Tceal8), found in Rattus norvegicus (Rat).